A 107-amino-acid polypeptide reads, in one-letter code: U1-lycotoxin-Ls1q (107 aa).

The N-terminal stretch at 1 to 20 is a signal peptide; it reads MMKVLVVVALLVTLISYSSS. Positions 21 to 41 are excised as a propeptide; sequence EGIDDLEADELLSLMANEQTR. Disulfide bonds link C44-C59, C51-C68, C58-C86, and C70-C84.

This sequence belongs to the neurotoxin 19 (CSTX) family. 04 (U1-Lctx) subfamily. In terms of tissue distribution, expressed by the venom gland.

Its subcellular location is the secreted. The sequence is that of U1-lycotoxin-Ls1q from Lycosa singoriensis (Wolf spider).